The sequence spans 894 residues: GTPase-activating protein GYP5 (894 aa).

The span at 1 to 23 (MSSDKSIEKNTDTIASEVHEGDN) shows a compositional bias: basic and acidic residues. Residues 1 to 324 (MSSDKSIEKN…VPPPLEEEMK (324 aa)) are disordered. Residues Ser-25 and Ser-30 each carry the phosphoserine modification. Phosphothreonine is present on Thr-89. A compositionally biased stretch (basic and acidic residues) spans 134-164 (IEKEYDAVKENEKVYADTKEVVSSPENREVT). 2 stretches are compositionally biased toward polar residues: residues 184-200 (GTTTAANANDISISSEV) and 268-279 (SSENEVSAIPTT). Phosphoserine is present on Ser-389. A Rab-GAP TBC domain is found at 451-630 (GIPPQIRGII…RIFDIVFVEG (180 aa)). A coiled-coil region spans residues 732-872 (EKEQKKEDHY…INKEQVSTAS (141 aa)).

The protein belongs to the GYP5 family. Interacts with GYL1 and RVS167; and is part of SEC4-containing complexes.

The protein resides in the cytoplasm. It is found in the bud. The protein localises to the bud neck. Its function is as follows. GTPase-activating protein which accelerates the GTP hydrolysis rate of YPT1 and SEC4. Involved in ER to Golgi trafficking and polarized exocytosis. This Saccharomyces cerevisiae (strain ATCC 204508 / S288c) (Baker's yeast) protein is GTPase-activating protein GYP5 (GYP5).